The following is a 270-amino-acid chain: 4-hydroxy-tetrahydrodipicolinate reductase (270 aa).

NAD(+) is bound by residues 9-14 (GAGGRM) and Glu35. NADP(+) is bound at residue Arg36. NAD(+) is bound by residues 99-101 (GTT) and 123-126 (ASNF). Catalysis depends on His156, which acts as the Proton donor/acceptor. Residue His157 participates in (S)-2,3,4,5-tetrahydrodipicolinate binding. The active-site Proton donor is Lys160. Position 166–167 (166–167 (GT)) interacts with (S)-2,3,4,5-tetrahydrodipicolinate.

The protein belongs to the DapB family.

The protein resides in the cytoplasm. The catalysed reaction is (S)-2,3,4,5-tetrahydrodipicolinate + NAD(+) + H2O = (2S,4S)-4-hydroxy-2,3,4,5-tetrahydrodipicolinate + NADH + H(+). The enzyme catalyses (S)-2,3,4,5-tetrahydrodipicolinate + NADP(+) + H2O = (2S,4S)-4-hydroxy-2,3,4,5-tetrahydrodipicolinate + NADPH + H(+). It functions in the pathway amino-acid biosynthesis; L-lysine biosynthesis via DAP pathway; (S)-tetrahydrodipicolinate from L-aspartate: step 4/4. Functionally, catalyzes the conversion of 4-hydroxy-tetrahydrodipicolinate (HTPA) to tetrahydrodipicolinate. The sequence is that of 4-hydroxy-tetrahydrodipicolinate reductase from Haemophilus influenzae (strain PittEE).